The following is a 99-amino-acid chain: Co-chaperonin GroES (99 aa).

This sequence belongs to the GroES chaperonin family. Heptamer of 7 subunits arranged in a ring. Interacts with the chaperonin GroEL.

The protein resides in the cytoplasm. Functionally, together with the chaperonin GroEL, plays an essential role in assisting protein folding. The GroEL-GroES system forms a nano-cage that allows encapsulation of the non-native substrate proteins and provides a physical environment optimized to promote and accelerate protein folding. GroES binds to the apical surface of the GroEL ring, thereby capping the opening of the GroEL channel. This Corynebacterium kroppenstedtii (strain DSM 44385 / JCM 11950 / CIP 105744 / CCUG 35717) protein is Co-chaperonin GroES.